Reading from the N-terminus, the 106-residue chain is Nucleoid-associated protein XAC1110 (106 aa).

Residues 80-89 (KIDAESKDRM) show a composition bias toward basic and acidic residues. The segment at 80 to 106 (KIDAESKDRMGSATAGMQLPPGMKLPF) is disordered.

This sequence belongs to the YbaB/EbfC family. As to quaternary structure, homodimer.

The protein localises to the cytoplasm. Its subcellular location is the nucleoid. Functionally, binds to DNA and alters its conformation. May be involved in regulation of gene expression, nucleoid organization and DNA protection. This Xanthomonas axonopodis pv. citri (strain 306) protein is Nucleoid-associated protein XAC1110.